A 172-amino-acid chain; its full sequence is Thioredoxin M-type, chloroplastic (172 aa).

Residues 1–60 (MALESLFKSIHTKTSLSSSIVFIFKGKACLLTSKSRIQESFAELNSFTSLVLLIENHVLL) constitute a chloroplast transit peptide. The 112-residue stretch at 61–172 (HAREAVNEVQ…TLSEKVEKYI (112 aa)) folds into the Thioredoxin domain. Residues Cys97 and Cys100 each act as nucleophile in the active site. Cys97 and Cys100 form a disulfide bridge.

The protein belongs to the thioredoxin family. Plant M-type subfamily. Forms a complex with heterodimeric ferredoxin-thioredoxin reductase (FTR) and ferredoxin.

It localises to the plastid. The protein localises to the chloroplast. Functionally, participates in various redox reactions through the reversible oxidation of the active center dithiol to a disulfide. The M form is known to activate NADP-malate dehydrogenase. The sequence is that of Thioredoxin M-type, chloroplastic from Pisum sativum (Garden pea).